The following is a 273-amino-acid chain: HMP-PP phosphatase (273 aa).

The Nucleophile role is filled by Asp-8. Asp-8, Asp-10, and Asp-212 together coordinate Mg(2+).

This sequence belongs to the HAD-like hydrolase superfamily. Cof family. The cofactor is Mg(2+).

The enzyme catalyses 4-amino-2-methyl-5-(diphosphooxymethyl)pyrimidine + H2O = 4-amino-2-methyl-5-(phosphooxymethyl)pyrimidine + phosphate + H(+). Functionally, catalyzes the hydrolysis of 4-amino-2-methyl-5-hydroxymethylpyrimidine pyrophosphate (HMP-PP) to 4-amino-2-methyl-5-hydroxymethylpyrimidine phosphate (HMP-P). The polypeptide is HMP-PP phosphatase (Yersinia pseudotuberculosis serotype IB (strain PB1/+)).